A 160-amino-acid polypeptide reads, in one-letter code: CXXC motif containing zinc binding protein (160 aa).

Zn(2+) contacts are provided by Cys-33, Cys-36, Cys-67, and Cys-70. Ser-75 is subject to Phosphoserine.

It belongs to the UPF0587 family. As to quaternary structure, monomer.

In Mus musculus (Mouse), this protein is CXXC motif containing zinc binding protein (Czib).